Reading from the N-terminus, the 109-residue chain is Nucleoid-associated protein Ssed_2851 (109 aa).

The protein belongs to the YbaB/EbfC family. As to quaternary structure, homodimer.

Its subcellular location is the cytoplasm. It localises to the nucleoid. Binds to DNA and alters its conformation. May be involved in regulation of gene expression, nucleoid organization and DNA protection. This chain is Nucleoid-associated protein Ssed_2851, found in Shewanella sediminis (strain HAW-EB3).